A 431-amino-acid polypeptide reads, in one-letter code: UDP-N-acetylmuramate--L-alanine ligase (431 aa).

108-114 (GSHGKTS) provides a ligand contact to ATP.

The protein belongs to the MurCDEF family.

It is found in the cytoplasm. It carries out the reaction UDP-N-acetyl-alpha-D-muramate + L-alanine + ATP = UDP-N-acetyl-alpha-D-muramoyl-L-alanine + ADP + phosphate + H(+). The protein operates within cell wall biogenesis; peptidoglycan biosynthesis. In terms of biological role, cell wall formation. In Macrococcus caseolyticus (strain JCSC5402) (Macrococcoides caseolyticum), this protein is UDP-N-acetylmuramate--L-alanine ligase.